A 680-amino-acid polypeptide reads, in one-letter code: Protein terminal ear1 homolog (680 aa).

The RRM domain maps to 223-295 (SLVVLNSLPA…RRLVVEYTRP (73 aa)). 2 disordered regions span residues 294 to 415 (RPSL…SWRG) and 593 to 680 (TEPV…GYTD). Composition is skewed to low complexity over residues 328 to 340 (PSQSAQPSSSGSG) and 379 to 403 (SAAAACSTAASASSSTATAPSKQSQ). The segment covering 404 to 413 (KGGGGRGGSW) has biased composition (gly residues). Composition is skewed to low complexity over residues 602 to 621 (SPAPSSASGASSPPKSCAAS) and 634 to 648 (SSSGDGASSASSSNA). The segment covering 656-666 (HGETGGDRGDD) has biased composition (basic and acidic residues).

In terms of tissue distribution, highly expressed in shoot apex and inflorescence apex, at intermediate levels in roots and at low levels in leaf blade and leaf sheath.

Probable RNA-binding protein. Involved in the regular timing (plastochron) of lateral organs formation. May regulate the rate of leaf initiation and the duration of vegetative phase. Seems to be redundant to the function of PLASTOCHRON1, but to act in an independent pathway. The sequence is that of Protein terminal ear1 homolog (PLA2) from Oryza sativa subsp. indica (Rice).